The following is a 327-amino-acid chain: tRNA(Ile)-lysidine synthase (327 aa).

32–37 (SGGQDS) provides a ligand contact to ATP.

It belongs to the tRNA(Ile)-lysidine synthase family.

It is found in the cytoplasm. The enzyme catalyses cytidine(34) in tRNA(Ile2) + L-lysine + ATP = lysidine(34) in tRNA(Ile2) + AMP + diphosphate + H(+). Ligates lysine onto the cytidine present at position 34 of the AUA codon-specific tRNA(Ile) that contains the anticodon CAU, in an ATP-dependent manner. Cytidine is converted to lysidine, thus changing the amino acid specificity of the tRNA from methionine to isoleucine. This Synechococcus sp. (strain JA-2-3B'a(2-13)) (Cyanobacteria bacterium Yellowstone B-Prime) protein is tRNA(Ile)-lysidine synthase.